Reading from the N-terminus, the 156-residue chain is RNA polymerase sigma factor SigS (156 aa).

Residues 29 to 44 carry the Polymerase core binding motif; sequence EYYQLLLIKMWQLSQI. Residues 126-145 constitute a DNA-binding region (H-T-H motif); sequence QFEIAEIMSLSLSTIKLIKT.

It belongs to the sigma-70 factor family.

Sigma factors are initiation factors that promote the attachment of RNA polymerase to specific initiation sites and are then released. Sigma-S contributes to the protection against external stress, thus playing a role in cellular fitness and survival. This chain is RNA polymerase sigma factor SigS (sigS), found in Staphylococcus aureus (strain bovine RF122 / ET3-1).